The primary structure comprises 336 residues: tRNA-dihydrouridine(20/20a) synthase (336 aa).

FMN is bound by residues 24-26 (PMM) and Gln-77. The active-site Proton donor is the Cys-107. FMN-binding positions include Lys-146, His-178, 218 to 220 (NGG), and 240 to 241 (GR).

Belongs to the Dus family. DusA subfamily. It depends on FMN as a cofactor.

The catalysed reaction is 5,6-dihydrouridine(20) in tRNA + NADP(+) = uridine(20) in tRNA + NADPH + H(+). The enzyme catalyses 5,6-dihydrouridine(20) in tRNA + NAD(+) = uridine(20) in tRNA + NADH + H(+). It catalyses the reaction 5,6-dihydrouridine(20a) in tRNA + NADP(+) = uridine(20a) in tRNA + NADPH + H(+). It carries out the reaction 5,6-dihydrouridine(20a) in tRNA + NAD(+) = uridine(20a) in tRNA + NADH + H(+). Functionally, catalyzes the synthesis of 5,6-dihydrouridine (D), a modified base found in the D-loop of most tRNAs, via the reduction of the C5-C6 double bond in target uridines. Specifically modifies U20 and U20a in tRNAs. This Pseudomonas putida (strain ATCC 47054 / DSM 6125 / CFBP 8728 / NCIMB 11950 / KT2440) protein is tRNA-dihydrouridine(20/20a) synthase.